A 238-amino-acid chain; its full sequence is Ribosomal RNA small subunit methyltransferase G (238 aa).

Residues Gly77, Phe82, 128 to 129 (AE), and Arg147 each bind S-adenosyl-L-methionine.

It belongs to the methyltransferase superfamily. RNA methyltransferase RsmG family.

It localises to the cytoplasm. Specifically methylates the N7 position of guanine in position 535 of 16S rRNA. The sequence is that of Ribosomal RNA small subunit methyltransferase G from Brevibacillus brevis (strain 47 / JCM 6285 / NBRC 100599).